Reading from the N-terminus, the 56-residue chain is Bdellin B-3 (56 aa).

A Kazal-like domain is found at 1-42 (DTECVCTKELHRVCGSDGVTYDNECLATCHGASVAHDHACEG). 3 disulfide bridges follow: cysteine 4–cysteine 29, cysteine 6–cysteine 25, and cysteine 14–cysteine 40.

Its function is as follows. Proteinase inhibitor. Blocks the activity of trypsin, plasmin and sperm acrosin. This Hirudo medicinalis (Medicinal leech) protein is Bdellin B-3.